The primary structure comprises 38 residues: Small toxic protein BsrG (38 aa).

A helical membrane pass occupies residues 11–31 (INFGGLILNTVLLIFNIMMIV).

It localises to the cell membrane. Its function is as follows. Toxic component of a type I toxin-antitoxin (TA) system; expression in the absence of cognate antisense antitoxin SR4 RNA leads to cell lysis. Induced expression causes membrane invaginations that dislocate the cell wall synthesis machinery, leading to eventual death. Unlike many type I TA systems it does not form pores. Base pairing occurs between the 3' UTRs of bsrG mRNA and SR4 RNA, which leads to initiation of degradation by RNase III (rnc) followed by the action of RNase Y (rny) and RNase R (rnr). Not toxic when expressed in E.coli. When induced during logarithmic growth it only slowly exerts its toxic effect. Expression during log growth leads to significant disturbances of cell envelope biosynthesis and cell morphology, causing cell membrane invaginations and delocalization of cell division and cell wall synthesis machinery. Cell lysis depends on mreB, lytC and lytD, suggesting expression of bsrG triggers autolysis rather than disintegration of the membrane. Additionally expression of bsrG also inhibits transcription. This chain is Small toxic protein BsrG, found in Bacillus subtilis (strain 168).